We begin with the raw amino-acid sequence, 822 residues long: Glycerol-3-phosphate acyltransferase (822 aa).

The HXXXXD motif signature appears at 304–309; that stretch reads CHRSHM.

The protein belongs to the GPAT/DAPAT family.

It is found in the cell inner membrane. It catalyses the reaction sn-glycerol 3-phosphate + an acyl-CoA = a 1-acyl-sn-glycero-3-phosphate + CoA. The protein operates within phospholipid metabolism; CDP-diacylglycerol biosynthesis; CDP-diacylglycerol from sn-glycerol 3-phosphate: step 1/3. This is Glycerol-3-phosphate acyltransferase from Yersinia enterocolitica serotype O:8 / biotype 1B (strain NCTC 13174 / 8081).